We begin with the raw amino-acid sequence, 188 residues long: GMP synthase [glutamine-hydrolyzing] subunit A (188 aa).

Residues 2–188 (KIYIIDNGGQ…FKNFIEKCRR (187 aa)) enclose the Glutamine amidotransferase type-1 domain. The Nucleophile role is filled by C79. Catalysis depends on residues H166 and E168.

Heterodimer composed of a glutamine amidotransferase subunit (A) and a GMP-binding subunit (B).

It catalyses the reaction XMP + L-glutamine + ATP + H2O = GMP + L-glutamate + AMP + diphosphate + 2 H(+). It functions in the pathway purine metabolism; GMP biosynthesis; GMP from XMP (L-Gln route): step 1/1. Catalyzes the synthesis of GMP from XMP. In Picrophilus torridus (strain ATCC 700027 / DSM 9790 / JCM 10055 / NBRC 100828 / KAW 2/3), this protein is GMP synthase [glutamine-hydrolyzing] subunit A.